A 198-amino-acid polypeptide reads, in one-letter code: Dephospho-CoA kinase (198 aa).

A DPCK domain is found at 4 to 198; that stretch reads FLGLTGGIAS…LSDLLQEIGR (195 aa). 12-17 serves as a coordination point for ATP; it reads ASGKST.

This sequence belongs to the CoaE family.

It localises to the cytoplasm. It catalyses the reaction 3'-dephospho-CoA + ATP = ADP + CoA + H(+). It participates in cofactor biosynthesis; coenzyme A biosynthesis; CoA from (R)-pantothenate: step 5/5. In terms of biological role, catalyzes the phosphorylation of the 3'-hydroxyl group of dephosphocoenzyme A to form coenzyme A. This is Dephospho-CoA kinase from Lactobacillus johnsonii (strain CNCM I-12250 / La1 / NCC 533).